The sequence spans 539 residues: Cytochrome P450 monooxygenase tenB (539 aa).

Residues 13 to 33 (LGYYEKVAGVLGFLSIALLFW) traverse the membrane as a helical segment. The tract at residues 439–460 (PFRFSRASKDDDDDGKSTSSHA) is disordered. Position 481 (Cys481) interacts with heme.

This sequence belongs to the cytochrome P450 family. Heme serves as cofactor.

The protein localises to the membrane. The protein operates within secondary metabolite biosynthesis. Its function is as follows. Cytochrome P450 monooxygenase; part of the gene cluster that mediates the biosynthesis of tenellin-type 2-pyridones, iron-chelating compounds involved in iron stress tolerance, competition with the natural competitor fungus Metarhizium robertsii and insect hosts infection. TenB catalyzes the selective N-hydroxylation of the 2-pyridone nitrogen of yield tellinin and 15-hydroxytellenin (15-HT), respectively. The pathway begins with the assembly of the polyketide-amino acid backbone by the hybrid PKS-NRPS tenS with the help of the enoyl reductase tenC. These enzymes catalyze the synthesis of the pyrrolidine-2-dione intermediates pretellinin A, 11-hydropretellenin A, 12-hydropretellenin A, 13-hydropretellenin A, 14-hydropretellenin A, 12-oxopretellenin A and prototellinin D. The cytochrome P450 monooxygenase tenA then catalyzes an oxidative ring expansion of pretenellin A and 14-hydropretellenin A to form the 2-pyridone core, leading to pretenellin B and pyridovericin, respectively. The cytochrome P450 monooxygenase tenB is then required for the selective N-hydroxylation of the 2-pyridone nitrogen of yield tellinin and 15-hydroxytellenin (15-HT), respectively. The UDP-glucosyltransferase GT1 and the methyltransferase MT1, located outside the tenS gene cluster, contribute to the stepwise glycosylation and methylation of 15-HT to obtain the glycoside pyridovericin-N-O-(4-O-methyl-beta-D-glucopyranoside) (PMGP). Additional related compounds such as 1-O-methyl-15-HT, (8Z)-1-O-methyl-15-HT, and O-methyltenellin A are also produced but the enzymes involved in their biosynthesis have still to be determined. The sequence is that of Cytochrome P450 monooxygenase tenB from Beauveria bassiana (White muscardine disease fungus).